A 586-amino-acid chain; its full sequence is Methionine--tRNA ligase, mitochondrial (586 aa).

Residues 1-46 (MLRQCARWVLTRTRFGRGCRRYGSCSPSASGDAGEARAYFTTPIFY) constitute a mitochondrion transit peptide. A 'HIGH' region motif is present at residues 45–55 (FYVNAAPHIGH). A 'KMSKS' region motif is present at residues 340-344 (KMSKS). Lys343 serves as a coordination point for ATP.

This sequence belongs to the class-I aminoacyl-tRNA synthetase family.

It is found in the mitochondrion matrix. It carries out the reaction tRNA(Met) + L-methionine + ATP = L-methionyl-tRNA(Met) + AMP + diphosphate. In Mus musculus (Mouse), this protein is Methionine--tRNA ligase, mitochondrial (Mars2).